The chain runs to 436 residues: 3-ketoacyl-CoA thiolase (436 aa).

The active-site Acyl-thioester intermediate is the Cys99. Active-site proton acceptor residues include His392 and Cys422.

This sequence belongs to the thiolase-like superfamily. Thiolase family. As to quaternary structure, heterotetramer of two alpha chains (FadJ) and two beta chains (FadI).

The protein localises to the cytoplasm. The enzyme catalyses an acyl-CoA + acetyl-CoA = a 3-oxoacyl-CoA + CoA. It functions in the pathway lipid metabolism; fatty acid beta-oxidation. Functionally, catalyzes the final step of fatty acid oxidation in which acetyl-CoA is released and the CoA ester of a fatty acid two carbons shorter is formed. This Escherichia coli O1:K1 / APEC protein is 3-ketoacyl-CoA thiolase.